The following is a 248-amino-acid chain: Leucyl/phenylalanyl-tRNA--protein transferase (248 aa).

Belongs to the L/F-transferase family.

Its subcellular location is the cytoplasm. It carries out the reaction N-terminal L-lysyl-[protein] + L-leucyl-tRNA(Leu) = N-terminal L-leucyl-L-lysyl-[protein] + tRNA(Leu) + H(+). It catalyses the reaction N-terminal L-arginyl-[protein] + L-leucyl-tRNA(Leu) = N-terminal L-leucyl-L-arginyl-[protein] + tRNA(Leu) + H(+). The enzyme catalyses L-phenylalanyl-tRNA(Phe) + an N-terminal L-alpha-aminoacyl-[protein] = an N-terminal L-phenylalanyl-L-alpha-aminoacyl-[protein] + tRNA(Phe). Its function is as follows. Functions in the N-end rule pathway of protein degradation where it conjugates Leu, Phe and, less efficiently, Met from aminoacyl-tRNAs to the N-termini of proteins containing an N-terminal arginine or lysine. The sequence is that of Leucyl/phenylalanyl-tRNA--protein transferase from Ralstonia pickettii (strain 12J).